The chain runs to 169 residues: Holo-[acyl-carrier-protein] synthase (169 aa).

Aspartate 8 and glutamate 50 together coordinate Mg(2+).

This sequence belongs to the P-Pant transferase superfamily. AcpS family. Requires Mg(2+) as cofactor.

It is found in the cytoplasm. The enzyme catalyses apo-[ACP] + CoA = holo-[ACP] + adenosine 3',5'-bisphosphate + H(+). Transfers the 4'-phosphopantetheine moiety from coenzyme A to a Ser of acyl-carrier-protein. This is Holo-[acyl-carrier-protein] synthase from Thermotoga maritima (strain ATCC 43589 / DSM 3109 / JCM 10099 / NBRC 100826 / MSB8).